Reading from the N-terminus, the 713-residue chain is Calpastatin (713 aa).

Residues 1–21 are compositionally biased toward low complexity; that stretch reads MSRPGPKPAASSRPRRGAAAS. The tract at residues 1–152 is disordered; it reads MSRPGPKPAA…SADGESVAGG (152 aa). Over residues 47 to 64 the composition is skewed to polar residues; it reads VTASSAATGTSPRMSTTG. A Phosphoserine modification is found at S57. Residue K69 forms a Glycyl lysine isopeptide (Lys-Gly) (interchain with G-Cter in SUMO2) linkage. K86 is subject to N6-acetyllysine. Polar residues predominate over residues 120-129; it reads SRSNEQIVSE. A phosphoserine mark is found at S122 and S171. A Phosphothreonine modification is found at T173. One copy of the Inhibitory domain 1 repeat lies at 208-260; it reads TNKDDPPYTGPVVLDPMDSTYLEALGIKEGTIPPEYRKLLEKNEAITGPLPDS. Positions 253-402 are disordered; it reads ITGPLPDSPK…PEETSKCLSE (150 aa). Phosphoserine occurs at positions 260 and 281. Polar residues-rich tracts occupy residues 275–285, 294–304, and 326–346; these read SDFTCSSPTGK, GESSKAQSAGV, and QALQ…QSHL. Residues 341–393 form an Inhibitory domain 2 repeat; that stretch reads DPQSHLRQAKQVKEAKAKEERQEKCGEDEDTVPAEYRLKPAKDKDGKPLLPEP. 2 stretches are compositionally biased toward basic and acidic residues: residues 351 to 365 and 376 to 387; these read QVKE…QEKC and YRLKPAKDKDGK. Residues S401, S403, S410, and S445 each carry the phosphoserine modification. The tract at residues 442–507 is disordered; it reads LARSLGTRKE…PLLPKEAEEQ (66 aa). Residues 448–505 show a composition bias toward basic and acidic residues; it reads TRKEDPEDEKSLVDKVKEKAKEEDHEKLGEKEETIPPDYRLEIVKDKDGKPLLPKEAE. One copy of the Inhibitory domain 3 repeat lies at 451–504; sequence EDPEDEKSLVDKVKEKAKEEDHEKLGEKEETIPPDYRLEIVKDKDGKPLLPKEA. A phosphoserine mark is found at S521 and S532. Residues 544–558 show a composition bias toward polar residues; it reads VSETVSQVPAPSNHT. The tract at residues 544 to 713 is disordered; that stretch reads VSETVSQVPA…PKPKVDEDAT (170 aa). 2 positions are modified to phosphoserine: S580 and S582. Residues 588–641 form an Inhibitory domain 4 repeat; it reads PDPDENKPLDDKVKEKIKAEHSEKLGERDDTIPPEYRHLLDNDGKDKPEKPLTK. Basic and acidic residues-rich tracts occupy residues 588 to 648 and 687 to 713; these read PDPD…KLGQ and SKNE…EDAT.

It belongs to the protease inhibitor I27 (calpastatin) family.

Functionally, specific inhibition of calpain (calcium-dependent cysteine protease). Plays a key role in postmortem tenderization of meat and have been proposed to be involved in muscle protein degradation in living tissue. This chain is Calpastatin (Cast), found in Rattus norvegicus (Rat).